A 319-amino-acid polypeptide reads, in one-letter code: Tetrahydromethanopterin S-methyltransferase subunit H (319 aa).

It belongs to the MtrH family. As to quaternary structure, the complex is composed of 8 subunits; MtrA, MtrB, MtrC, MtrD, MtrE, MtrF, MtrG and MtrH.

It catalyses the reaction 5-methyl-5,6,7,8-tetrahydromethanopterin + coenzyme M + 2 Na(+)(in) = 5,6,7,8-tetrahydromethanopterin + methyl-coenzyme M + 2 Na(+)(out). It functions in the pathway one-carbon metabolism; methanogenesis from CO(2); methyl-coenzyme M from 5,10-methylene-5,6,7,8-tetrahydromethanopterin: step 2/2. In terms of biological role, part of a complex that catalyzes the formation of methyl-coenzyme M and tetrahydromethanopterin from coenzyme M and methyl-tetrahydromethanopterin. This is an energy-conserving, sodium-ion translocating step. MtrH catalyzes the transfer of the methyl group from methyl-tetrahydromethanopterin to the corrinoid prosthetic group of MtrA. This chain is Tetrahydromethanopterin S-methyltransferase subunit H, found in Methanocaldococcus jannaschii (strain ATCC 43067 / DSM 2661 / JAL-1 / JCM 10045 / NBRC 100440) (Methanococcus jannaschii).